The primary structure comprises 148 residues: Snaclec 3 (148 aa).

Positions methionine 1–alanine 23 are cleaved as a signal peptide. 3 cysteine pairs are disulfide-bonded: cysteine 27–cysteine 38, cysteine 55–cysteine 144, and cysteine 121–cysteine 136. Positions tyrosine 34–lysine 145 constitute a C-type lectin domain.

Belongs to the snaclec family. In terms of assembly, heterodimer; disulfide-linked.

Its subcellular location is the secreted. In terms of biological role, interferes with one step of hemostasis (modulation of platelet aggregation, or coagulation cascade, for example). This is Snaclec 3 from Daboia siamensis (Eastern Russel's viper).